The following is a 221-amino-acid chain: CASP-like protein 2U10 (221 aa).

Residues 1–22 (MDSSSKPMNGSAGGSPVGDERK) are disordered. Topologically, residues 1–31 (MDSSSKPMNGSAGGSPVGDERKMGDHEHEFR) are cytoplasmic. Residues 32-52 (ISIILLRSFLLVLVIISEALM) traverse the membrane as a helical segment. The Extracellular portion of the chain corresponds to 53 to 91 (VTDRETGSVPLPFFGLPRPVFVTKTAKYELVTGLKFYVD). A helical membrane pass occupies residues 92 to 112 (ALGVVIGYTVLHLLFNIGLVA). Over 113–122 (TKGTVVDCKS) the chain is Cytoplasmic. A helical membrane pass occupies residues 123–143 (VAWISFIADSMMGYLLLSSAA). At 144 to 174 (VATEIGYLAEEGAPAVLWRKVCNAFGYFCTV) the chain is on the extracellular side. The chain crosses the membrane as a helical span at residues 175-195 (YAISVVICFIAALVSFVVVGI). The Cytoplasmic portion of the chain corresponds to 196–221 (SAYHLFRLYGIQQQAAREKEKLSAEM).

This sequence belongs to the Casparian strip membrane proteins (CASP) family. As to quaternary structure, homodimer and heterodimers.

The protein localises to the cell membrane. This is CASP-like protein 2U10 from Selaginella moellendorffii (Spikemoss).